The chain runs to 179 residues: Large ribosomal subunit protein uL6 (179 aa).

It belongs to the universal ribosomal protein uL6 family. Part of the 50S ribosomal subunit.

In terms of biological role, this protein binds to the 23S rRNA, and is important in its secondary structure. It is located near the subunit interface in the base of the L7/L12 stalk, and near the tRNA binding site of the peptidyltransferase center. This chain is Large ribosomal subunit protein uL6, found in Geotalea uraniireducens (strain Rf4) (Geobacter uraniireducens).